A 367-amino-acid polypeptide reads, in one-letter code: Septin-1 (367 aa).

Positions 22–296 (KGFDFTLMVA…EGYRARCLQS (275 aa)) constitute a Septin-type G domain. A G1 motif region spans residues 32–39 (GESGLGKS). GTP contacts are provided by residues 32 to 39 (GESGLGKS), Thr-66, Gly-92, and 171 to 179 (KADALMPKE). The tract at residues 89 to 92 (DTPG) is G3 motif. The G4 motif stretch occupies residues 170 to 173 (GKAD). Residue Ser-206 is modified to Phosphoserine. 2 residues coordinate GTP: Gly-229 and Arg-245. Residue Ser-248 is modified to Phosphoserine; by AURKB. Residue Thr-251 is modified to Phosphothreonine. Residues Ser-307 and Ser-315 each carry the phosphoserine; by AURKB modification.

Belongs to the TRAFAC class TrmE-Era-EngA-EngB-Septin-like GTPase superfamily. Septin GTPase family. In terms of assembly, septins polymerize into heterooligomeric protein complexes that form filaments, and can associate with cellular membranes, actin filaments and microtubules. GTPase activity is required for filament formation. Interacts with AURKB.

It localises to the cytoplasm. The protein resides in the cytoskeleton. Its subcellular location is the microtubule organizing center. The protein localises to the centrosome. It is found in the midbody. Its function is as follows. Filament-forming cytoskeletal GTPase. May play a role in cytokinesis (Potential). The protein is Septin-1 of Bos taurus (Bovine).